A 551-amino-acid chain; its full sequence is MKKNSSVVFFLVGLSQFVTMAFLIIGSITAPIFKQIGYSKYDEITYGTFGYCKEGSCSKASYNYHPDELSDSDSNWKLNSNARSILGKIIFITPIAAGLNFLGFLCTIMSVLLINVLSSDRVGSASAIMFFVNLTFSTLGFLSASLICIVVFLLFYPHVTWCSWVLIPGAALSLLVIPLIFSAYSRSSGSRDDDETEELEEKGMLLNDPYLSSKSGRFDIDADSEANLRGDSRTNLLGDNFKNGTNITVVPDIISHNQDPKLSNITTSTTSDISTFDKEAKDMENSNGSGLNEEEDDGMAYDKRRSTSTYSVIESESGLKNGSVSNNYVRNNGSNTSNNINYKVPLGKTEISSSASLASSDYSQREVIPHRNPSRLLNDIMETSFNEPNDSHINSMSSYNDKDSTLTSISQRGVNPEVYNQMPRETAAGPANIRPYAGQPHPAPLVYPQQRLQPQQQQPQQQYHQYNLYQRTTPAGPDPSNVILQSNPYFNVAPNQVPQHRNPVPGVGFAPNPLPNQSPITQGYKPAYKRRMQNKNLPRATTSLNNPYGFR.

Residues 1–7 are Cytoplasmic-facing; that stretch reads MKKNSSV. Residues 8–28 form a helical membrane-spanning segment; the sequence is VFFLVGLSQFVTMAFLIIGSI. The Vacuolar portion of the chain corresponds to 29 to 88; sequence TAPIFKQIGYSKYDEITYGTFGYCKEGSCSKASYNYHPDELSDSDSNWKLNSNARSILGK. The helical transmembrane segment at 89 to 109 threads the bilayer; the sequence is IIFITPIAAGLNFLGFLCTIM. The Cytoplasmic portion of the chain corresponds to 110–135; that stretch reads SVLLINVLSSDRVGSASAIMFFVNLT. A helical membrane pass occupies residues 136-156; it reads FSTLGFLSASLICIVVFLLFY. Topologically, residues 157–160 are vacuolar; that stretch reads PHVT. Residues 161 to 181 form a helical membrane-spanning segment; that stretch reads WCSWVLIPGAALSLLVIPLIF. At 182-551 the chain is on the cytoplasmic side; that stretch reads SAYSRSSGSR…TSLNNPYGFR (370 aa). Phosphoserine is present on residues serine 224 and serine 232. A disordered region spans residues 280–341; the sequence is AKDMENSNGS…NGSNTSNNIN (62 aa). Positions 307–320 are enriched in polar residues; the sequence is TSTYSVIESESGLK. Residues 321–341 are compositionally biased toward low complexity; it reads NGSVSNNYVRNNGSNTSNNIN. Serine 363 carries the post-translational modification Phosphoserine.

Forms homo dimers or homooligomers in MCC microdomains. Interacts with BOI2 and RHO3, two key regulators of secretion.

The protein localises to the vacuole membrane. It is found in the cell membrane. Its function is as follows. Protein involved in secretion and cell wall organization. Contributes to cell surface-related functions as a auxiliary component of MCC/eisosome that specifically interacts with the secretory pathway. This is an uncharacterized protein from Saccharomyces cerevisiae (strain ATCC 204508 / S288c) (Baker's yeast).